The sequence spans 286 residues: ATP-binding protein ChvD (286 aa).

The 65-residue stretch at 21 to 85 folds into the ABC transporter domain; sequence KLQDMIDSQN…DLLLLDEPTN (65 aa).

Belongs to the ABC transporter superfamily.

Functionally, the induction of virG by growth under acidic conditions and by phosphate starvation, in the absence of plant inducers, is influenced by ChvD. The protein is ATP-binding protein ChvD (chvD) of Rhizobium radiobacter (Agrobacterium tumefaciens).